The following is a 163-amino-acid chain: Allophycocyanin alpha-B chain (163 aa).

The residue at position 71 (Asn71) is an N4-methylasparagine. Residue Cys81 participates in (2R,3E)-phycocyanobilin binding.

This sequence belongs to the phycobiliprotein family. Post-translationally, contains one covalently linked bilin chromophore.

Its subcellular location is the plastid. It localises to the chloroplast thylakoid membrane. Allophycocyanin is a photosynthetic bile pigment-protein complex with maximum absorption at approximately 650 nanometers. This chain is Allophycocyanin alpha-B chain (apcD), found in Cyanidium caldarium (Red alga).